We begin with the raw amino-acid sequence, 270 residues long: MKFLEKLKQAGNRNKSLLCVGLDPDPKLMPVGMSALEFNREIIEATAPFVCGYKINLAFYEALGKQGWEILSETCEFIPRELITIADAKRGDIGNTSKAYARAILDELDCDGVTVSPYLGYDSLEPFIEYQDKGIFILCLTSNQGSTDFQMLKTEYLGQKRFLYEVVADKASLWNRYENIGLVVGATQQEELKKLRLSYPKLPFLIPGIGAQGGDLKATIENGTNPNGELAIICASRGILYARSGSEFAQGAAEAAEQMRDAINHYRKRF.

Catalysis depends on K89, which acts as the Proton donor.

Belongs to the OMP decarboxylase family. Type 2 subfamily.

The enzyme catalyses orotidine 5'-phosphate + H(+) = UMP + CO2. It functions in the pathway pyrimidine metabolism; UMP biosynthesis via de novo pathway; UMP from orotate: step 2/2. This chain is Orotidine 5'-phosphate decarboxylase, found in Dehalococcoides mccartyi (strain CBDB1).